The following is a 233-amino-acid chain: MLALRTSVGLTKNLFTRRLHISPVLLKKKPSHKGKGGPVEDEEIDIVNPSIYVDELVSKFDKSLELYSKELTDKRKGSVNANIFDNLSLKNGALFKEMASTTLKGKGSLLVTVFDPNEVKNIVSAILASGQNLNPERVPTNNQQLKIPLPPPTAESRQNLCKELKTVFEKYKQSPSKNSLGHIRNEVMKKLKSLQKKDESVKKIIQNVEKVHKDYVTKLSEQLKQAEKSVMGQ.

The protein belongs to the RRF family.

The protein localises to the mitochondrion. Its function is as follows. Necessary for protein synthesis in mitochondria. Functions as a ribosome recycling factor in mitochondria. In Candida glabrata (strain ATCC 2001 / BCRC 20586 / JCM 3761 / NBRC 0622 / NRRL Y-65 / CBS 138) (Yeast), this protein is Ribosome-recycling factor, mitochondrial (RRF1).